Consider the following 145-residue polypeptide: Ribosomal RNA large subunit methyltransferase H (145 aa).

Residues leucine 62, glycine 94, and 113–118 contribute to the S-adenosyl-L-methionine site; that span reads LGQLTL.

It belongs to the RNA methyltransferase RlmH family. Homodimer.

The protein localises to the cytoplasm. It catalyses the reaction pseudouridine(1915) in 23S rRNA + S-adenosyl-L-methionine = N(3)-methylpseudouridine(1915) in 23S rRNA + S-adenosyl-L-homocysteine + H(+). Its function is as follows. Specifically methylates the pseudouridine at position 1915 (m3Psi1915) in 23S rRNA. In Deinococcus deserti (strain DSM 17065 / CIP 109153 / LMG 22923 / VCD115), this protein is Ribosomal RNA large subunit methyltransferase H.